A 132-amino-acid chain; its full sequence is uncharacterized protein (132 aa).

The disordered stretch occupies residues 68–91 (WSRTSPNSSRSSPRSPASMASTSS).

This is an uncharacterized protein from Streptomyces cacaoi.